Here is a 267-residue protein sequence, read N- to C-terminus: 3-methyl-2-oxobutanoate hydroxymethyltransferase (267 aa).

The Mg(2+) site is built by Asp46 and Asp85. Residues Asp46–Ser47, Asp85, and Lys115 contribute to the 3-methyl-2-oxobutanoate site. Position 117 (Glu117) interacts with Mg(2+). The active-site Proton acceptor is Glu184.

The protein belongs to the PanB family. Homodecamer; pentamer of dimers. Requires Mg(2+) as cofactor.

It is found in the cytoplasm. It carries out the reaction 3-methyl-2-oxobutanoate + (6R)-5,10-methylene-5,6,7,8-tetrahydrofolate + H2O = 2-dehydropantoate + (6S)-5,6,7,8-tetrahydrofolate. Its pathway is cofactor biosynthesis; (R)-pantothenate biosynthesis; (R)-pantoate from 3-methyl-2-oxobutanoate: step 1/2. In terms of biological role, catalyzes the reversible reaction in which hydroxymethyl group from 5,10-methylenetetrahydrofolate is transferred onto alpha-ketoisovalerate to form ketopantoate. This chain is 3-methyl-2-oxobutanoate hydroxymethyltransferase, found in Syntrophotalea carbinolica (strain DSM 2380 / NBRC 103641 / GraBd1) (Pelobacter carbinolicus).